The sequence spans 189 residues: Large ribosomal subunit protein uL13 (189 aa).

Belongs to the universal ribosomal protein uL13 family.

The protein is Large ribosomal subunit protein uL13 (rpl13a) of Salmo trutta (Brown trout).